A 469-amino-acid polypeptide reads, in one-letter code: 3-isopropylmalate dehydratase large subunit (469 aa).

The [4Fe-4S] cluster site is built by cysteine 347, cysteine 410, and cysteine 413.

Belongs to the aconitase/IPM isomerase family. LeuC type 1 subfamily. As to quaternary structure, heterodimer of LeuC and LeuD. [4Fe-4S] cluster is required as a cofactor.

It carries out the reaction (2R,3S)-3-isopropylmalate = (2S)-2-isopropylmalate. Its pathway is amino-acid biosynthesis; L-leucine biosynthesis; L-leucine from 3-methyl-2-oxobutanoate: step 2/4. Functionally, catalyzes the isomerization between 2-isopropylmalate and 3-isopropylmalate, via the formation of 2-isopropylmaleate. The polypeptide is 3-isopropylmalate dehydratase large subunit (Cupriavidus pinatubonensis (strain JMP 134 / LMG 1197) (Cupriavidus necator (strain JMP 134))).